We begin with the raw amino-acid sequence, 245 residues long: 3-deoxy-manno-octulosonate cytidylyltransferase (245 aa).

It belongs to the KdsB family.

It is found in the cytoplasm. The enzyme catalyses 3-deoxy-alpha-D-manno-oct-2-ulosonate + CTP = CMP-3-deoxy-beta-D-manno-octulosonate + diphosphate. Its pathway is nucleotide-sugar biosynthesis; CMP-3-deoxy-D-manno-octulosonate biosynthesis; CMP-3-deoxy-D-manno-octulosonate from 3-deoxy-D-manno-octulosonate and CTP: step 1/1. It participates in bacterial outer membrane biogenesis; lipopolysaccharide biosynthesis. Its function is as follows. Activates KDO (a required 8-carbon sugar) for incorporation into bacterial lipopolysaccharide in Gram-negative bacteria. This Rhodopseudomonas palustris (strain ATCC BAA-98 / CGA009) protein is 3-deoxy-manno-octulosonate cytidylyltransferase.